A 304-amino-acid chain; its full sequence is D-alanine--D-alanine ligase (304 aa).

Residues 103–299 (KLIWQALGLP…FADLCIEILK (197 aa)) enclose the ATP-grasp domain. 129–184 (EEKLGLPMFVKPAAEGSSVGVVKVKGKGRLKSVYEELKHLQGEIIAERFIGGGEYS) serves as a coordination point for ATP. Mg(2+)-binding residues include aspartate 253, glutamate 266, and asparagine 268.

The protein belongs to the D-alanine--D-alanine ligase family. The cofactor is Mg(2+). Requires Mn(2+) as cofactor.

The protein resides in the cytoplasm. It catalyses the reaction 2 D-alanine + ATP = D-alanyl-D-alanine + ADP + phosphate + H(+). The protein operates within cell wall biogenesis; peptidoglycan biosynthesis. Cell wall formation. This Neisseria meningitidis serogroup B (strain ATCC BAA-335 / MC58) protein is D-alanine--D-alanine ligase.